We begin with the raw amino-acid sequence, 289 residues long: 4-diphosphocytidyl-2-C-methyl-D-erythritol kinase (289 aa).

Lys11 is an active-site residue. 95–105 (PMGGGIGGGSS) contacts ATP. Asp137 is an active-site residue.

The protein belongs to the GHMP kinase family. IspE subfamily.

The enzyme catalyses 4-CDP-2-C-methyl-D-erythritol + ATP = 4-CDP-2-C-methyl-D-erythritol 2-phosphate + ADP + H(+). The protein operates within isoprenoid biosynthesis; isopentenyl diphosphate biosynthesis via DXP pathway; isopentenyl diphosphate from 1-deoxy-D-xylulose 5-phosphate: step 3/6. Its function is as follows. Catalyzes the phosphorylation of the position 2 hydroxy group of 4-diphosphocytidyl-2C-methyl-D-erythritol. This chain is 4-diphosphocytidyl-2-C-methyl-D-erythritol kinase, found in Aeromonas hydrophila subsp. hydrophila (strain ATCC 7966 / DSM 30187 / BCRC 13018 / CCUG 14551 / JCM 1027 / KCTC 2358 / NCIMB 9240 / NCTC 8049).